The chain runs to 139 residues: Mannose-specific lectin (139 aa).

One can recognise a Bulb-type lectin domain in the interval 1-109; sequence DNILYSGETL…ARWATGTNIH (109 aa). Q26, D28, N30, Y34, D37, K38, W41, A42, N44, Q57, D59, N61, Y65, I72, W73, N76, N83, Q89, D91, N93, Y97, and W102 together coordinate alpha-D-mannopyranose. A disulfide bridge links C29 with C52.

Homotetramer; antiparallel. As to expression, detected in bulbs (at protein level).

The protein resides in the secreted. In terms of biological role, mannose-specific lectin. Displays antiviral activity and therefore may contribute to defense against infections. Shows agglutinating activity towards rabbit erythrocytes. This Narcissus tazetta (Cream narcissus) protein is Mannose-specific lectin.